The following is a 273-amino-acid chain: uncharacterized protein (273 aa).

Its subcellular location is the virion. This is an uncharacterized protein from Acanthamoeba polyphaga (Amoeba).